The chain runs to 154 residues: Jupiter microtubule associated homolog 1 (154 aa).

Met-1 is modified (N-acetylmethionine). Residues 1-19 (MTTTTTFKGVDPNSRNSSR) show a composition bias toward polar residues. Positions 1-154 (MTTTTTFKGV…PGGKSSLVLG (154 aa)) are disordered. Position 2 is an N-acetylthreonine; in Hematological and neurological expressed 1 protein, N-terminally processed (Thr-2). Ser-28 and Ser-31 each carry phosphoserine. Residues 47–59 (MASNIFGTPEENQ) show a composition bias toward polar residues. Position 54 is a phosphothreonine (Thr-54). Residues 60–71 (ASWAKSAGAKSS) are compositionally biased toward low complexity. Ser-71, Ser-80, Ser-87, Ser-88, and Ser-92 each carry phosphoserine. Polar residues predominate over residues 80–91 (SGLQRRNSSEAS). Over residues 96–108 (LDLKGEGDIHENV) the composition is skewed to basic and acidic residues. Residues 125-138 (PAAPVPSPVAPAPV) are compositionally biased toward pro residues. Phosphoserine is present on Ser-131. Position 148 is an N6-acetyllysine (Lys-148).

The protein belongs to the JUPITER family. Interacts with the complex composed, at least, of APC, CTNNB1 and GSK3B; the interaction takes place with the inactive form of GSK3B (phosphorylated at 'Ser-9'). As to expression, expressed in testis, skeletal muscle, thymus, prostate, colon, peripheral blood cells, brain and placenta.

It is found in the nucleus. Its subcellular location is the cytoplasm. Functionally, modulates negatively AKT-mediated GSK3B signaling. Induces CTNNB1 'Ser-33' phosphorylation and degradation through the suppression of the inhibitory 'Ser-9' phosphorylation of GSK3B, which represses the function of the APC:CTNNB1:GSK3B complex and the interaction with CDH1/E-cadherin in adherent junctions. Plays a role in the regulation of cell cycle and cell adhesion. Has an inhibitory role on AR-signaling pathway through the induction of receptor proteasomal degradation. This is Jupiter microtubule associated homolog 1 from Homo sapiens (Human).